A 902-amino-acid polypeptide reads, in one-letter code: Respiratory burst oxidase homolog protein A (902 aa).

Over 1–344 (MMNRSEMQKL…KYFLFDNWKR (344 aa)) the chain is Cytoplasmic. 2 disordered regions span residues 63-87 (KSPN…RSGR) and 107-130 (ASSV…RRSK). A compositionally biased stretch (polar residues) spans 74–87 (YEDQSLLRQGRSGR). A compositionally biased stretch (low complexity) spans 107–116 (ASSVSSSSAR). 2 EF-hand-like regions span residues 163 to 173 (TMTTNGLLHRS) and 198 to 209 (ENVSGDSININE). 2 consecutive EF-hand domains span residues 221–256 (DFDS…SASA) and 265–300 (QADE…APMQ). Ca(2+)-binding residues include D234, D236, D238, R240, and E245. Phosphoserine occurs at positions 311 and 315. Residues 345–365 (VWVMALWIGAMAGLFTWKFME) traverse the membrane as a helical segment. Over 366–380 (YRKRSAYEVMGVCVC) the chain is Extracellular. A helical membrane pass occupies residues 381–401 (IAKGAAETLKLNMAMILLPVC). Residues 383-540 (KGAAETLKLN…LFVIVYSLLV (158 aa)) form the Ferric oxidoreductase domain. Over 402–428 (RNTITWLRTKTKLSAIVPFDDSLNFHK) the chain is Cytoplasmic. A helical membrane pass occupies residues 429 to 449 (VIAIGISVGVGIHATSHLACD). Residues 450–484 (FPRLIAADEDQYEPMEKYFGPQTKRYLDFVQSVEG) are Extracellular-facing. The chain crosses the membrane as a helical span at residues 485–505 (VTGIGMVVLMTIAFTLATTWF). The Cytoplasmic portion of the chain corresponds to 506-529 (RRNKLNLPGPLKKITGFNAFWYSH). Residues 530-550 (HLFVIVYSLLVVHGFYVYLII) form a helical membrane-spanning segment. Over 551–709 (EPWYKKTTWM…PAQDYKKFEV (159 aa)) the chain is Extracellular. Residues 575 to 703 (IRAFRSSVEA…DGPYGAPAQD (129 aa)) form the FAD-binding FR-type domain. Residues 710 to 730 (VLLVGLGIGATPMISIVSDII) form a helical membrane-spanning segment. The Cytoplasmic portion of the chain corresponds to 731-902 (NNLKGVEEGS…TKFIFHKENF (172 aa)). The interval 738-760 (EGSNRRQSPIHNMVTPPVSPSRK) is disordered.

It belongs to the RBOH (TC 5.B.1.3) family. In terms of assembly, monomer and homodimer.

The protein localises to the membrane. In terms of biological role, calcium-dependent NADPH oxidase that generates superoxide. This chain is Respiratory burst oxidase homolog protein A (RBOHA), found in Arabidopsis thaliana (Mouse-ear cress).